We begin with the raw amino-acid sequence, 223 residues long: Cytotoxic T-lymphocyte protein 4 (223 aa).

Positions 1 to 35 (MAGFGFRRHGVQPDLASRTWPCTALFSLLFIPVFS) are cleaved as a signal peptide. Topologically, residues 36–161 (KGMHAAQPAV…IDPEPCPDSD (126 aa)) are extracellular. The 102-residue stretch at 39–140 (HAAQPAVVLA…VELMYPPPYY (102 aa)) folds into the Ig-like V-type domain. A homodimerization region spans residues 46–50 (VLASS). 2 disulfides stabilise this stretch: Cys-58–Cys-129 and Cys-85–Cys-103. N-linked (GlcNAc...) asparagine glycosylation is present at Asn-113. Residues 134–139 (MYPPPY) are important for interaction with CD80 and CD86. A glycan (N-linked (GlcNAc...) asparagine) is linked at Asn-145. A homodimerization region spans residues 150-155 (YVIDPE). Residues 162–182 (FLLWILAAVSSGLFFYSFLIT) traverse the membrane as a helical segment. Residues 183 to 223 (AVSLSKMLKKRSPLTTGVYVKMPPTGPECEKQFQPYFIPIN) are Cytoplasmic-facing. Tyr-201 is subject to Phosphotyrosine; by TXK and JAK2.

As to quaternary structure, homodimer; disulfide-linked. Binds to CD80/B7-1 and CD86/B7.2. Interacts with ICOSLG. N-glycosylation is important for dimerization. In terms of processing, phosphorylation at Tyr-201 prevents binding to the AP-2 adapter complex, blocks endocytosis, and leads to retention of CTLA4 on the cell surface.

Its subcellular location is the cell membrane. In terms of biological role, inhibitory receptor acting as a major negative regulator of T-cell responses. The affinity of CTLA4 for its natural B7 family ligands, CD80 and CD86, is considerably stronger than the affinity of their cognate stimulatory coreceptor CD28. This chain is Cytotoxic T-lymphocyte protein 4 (CTLA4), found in Canis lupus familiaris (Dog).